Here is a 1143-residue protein sequence, read N- to C-terminus: Probable ATP-dependent RNA helicase DHX34 (1143 aa).

Disordered stretches follow at residues 1 to 24 (MPPP…EEEA) and 75 to 94 (TSRK…PALA). Residues 76 to 85 (SRKEEKDPGQ) show a composition bias toward basic and acidic residues. One can recognise a Helicase ATP-binding domain in the interval 172-332 (LQTLKEHQVV…FSNAPVVQVP (161 aa)). Position 185–192 (185–192 (GDTGCGKS)) interacts with ATP. The DEAH box signature appears at 279 to 282 (DEVH). A Helicase C-terminal domain is found at 368-536 (SIDHKYPPEE…SLVLQMKSMS (169 aa)). A negatively regulates interaction with UPF1 region spans residues 701-955 (QAAQVGDSYS…LRARWESALD (255 aa)). Residues 724–766 (LKRQHEEGAGRRRKVLRLQEEQDGGSSDEDRAGPAPPGASDGV) form a disordered region. Residues Ser749 and Ser750 each carry the phosphoserine modification. The interval 810–1143 (PQLAVPDAFN…EVLRHRKQHV (334 aa)) is required for phosphorylation of UPF1. Not required for interaction with UPF1. The segment at 957–1143 (QLAHQAQQQL…EVLRHRKQHV (187 aa)) is required for the interaction with SMG1 and subsequent phosphorylation of UPF1.

It belongs to the DEAD box helicase family. DEAH subfamily. In terms of assembly, forms a complex with RUVBL1 and RUVBL2. Part of a complex composed of SMG1, DHX34 and UPF1; within the complex DHX34 acts as a scaffolding protein to facilitate SMG1 phosphorylation of UPF1. Interacts with UPF1, MOV10, EIF4A3, XRN2, SMG6, SMG7, SMG9, UPF3A, UPF3B, CASC3/MLN51, XRN1, DIS3 and DCP1A; the interactions are RNA-independent. Interacts with NCBP1/CPB80; the interaction is RNA-dependent. Interacts (via C-terminus) with SMG1; the interaction is RNA-independent. As to expression, expressed in whole blood, testis and spleen. Also expressed in the brain.

The catalysed reaction is ATP + H2O = ADP + phosphate + H(+). Functionally, probable ATP-binding RNA helicase required for nonsense-mediated decay (NMD) degradation of mRNA transcripts containing premature stop codons. Promotes the phosphorylation of UPF1 along with its interaction with key NMD pathway proteins UPF2 and EIF4A3. Interaction with the RUVBL1-RUVBL2 complex results in loss of nucleotide binding ability and ATP hydrolysis of the complex. Negatively regulates the nucleotide binding ability and ATP hydrolysis of the RUVBL1-RUVBL2 complex via induction of N-terminus conformation changes of the RUVBL2 subunits. The chain is Probable ATP-dependent RNA helicase DHX34 from Homo sapiens (Human).